We begin with the raw amino-acid sequence, 181 residues long: ATP-dependent protease subunit HslV (181 aa).

Residue Thr9 is part of the active site. The Na(+) site is built by Ala166, Cys169, and Thr172.

This sequence belongs to the peptidase T1B family. HslV subfamily. In terms of assembly, a double ring-shaped homohexamer of HslV is capped on each side by a ring-shaped HslU homohexamer. The assembly of the HslU/HslV complex is dependent on binding of ATP.

The protein localises to the cytoplasm. It catalyses the reaction ATP-dependent cleavage of peptide bonds with broad specificity.. Allosterically activated by HslU binding. In terms of biological role, protease subunit of a proteasome-like degradation complex believed to be a general protein degrading machinery. This is ATP-dependent protease subunit HslV from Staphylococcus aureus (strain JH1).